The primary structure comprises 236 residues: ATP synthase subunit a (236 aa).

Transmembrane regions (helical) follow at residues 17–37 (LSDM…AVAA), 75–95 (FLTL…LGLP), 112–132 (DATV…YYGV), 174–194 (IYAG…YGVL), and 208–228 (FSIF…MVYM).

This sequence belongs to the ATPase A chain family. F-type ATPases have 2 components, CF(1) - the catalytic core - and CF(0) - the membrane proton channel. CF(1) has five subunits: alpha(3), beta(3), gamma(1), delta(1), epsilon(1). CF(0) has three main subunits: a(1), b(2) and c(9-12). The alpha and beta chains form an alternating ring which encloses part of the gamma chain. CF(1) is attached to CF(0) by a central stalk formed by the gamma and epsilon chains, while a peripheral stalk is formed by the delta and b chains.

It is found in the cell membrane. Functionally, key component of the proton channel; it plays a direct role in the translocation of protons across the membrane. This chain is ATP synthase subunit a, found in Geobacillus stearothermophilus (Bacillus stearothermophilus).